The sequence spans 174 residues: Dual-action ribosomal maturation protein DarP (174 aa).

The protein belongs to the DarP family.

Its subcellular location is the cytoplasm. Functionally, member of a network of 50S ribosomal subunit biogenesis factors which assembles along the 30S-50S interface, preventing incorrect 23S rRNA structures from forming. Promotes peptidyl transferase center (PTC) maturation. The sequence is that of Dual-action ribosomal maturation protein DarP from Pseudomonas aeruginosa (strain LESB58).